Here is a 457-residue protein sequence, read N- to C-terminus: Argininosuccinate lyase (457 aa).

This sequence belongs to the lyase 1 family. Argininosuccinate lyase subfamily.

The protein localises to the cytoplasm. It carries out the reaction 2-(N(omega)-L-arginino)succinate = fumarate + L-arginine. The protein operates within amino-acid biosynthesis; L-arginine biosynthesis; L-arginine from L-ornithine and carbamoyl phosphate: step 3/3. The protein is Argininosuccinate lyase of Sodalis glossinidius (strain morsitans).